The primary structure comprises 188 residues: Peptidyl-tRNA hydrolase (188 aa).

F15 contributes to the tRNA binding site. H20 functions as the Proton acceptor in the catalytic mechanism. 3 residues coordinate tRNA: Y64, N66, and N112.

It belongs to the PTH family. Monomer.

It localises to the cytoplasm. The enzyme catalyses an N-acyl-L-alpha-aminoacyl-tRNA + H2O = an N-acyl-L-amino acid + a tRNA + H(+). Functionally, hydrolyzes ribosome-free peptidyl-tRNAs (with 1 or more amino acids incorporated), which drop off the ribosome during protein synthesis, or as a result of ribosome stalling. In terms of biological role, catalyzes the release of premature peptidyl moieties from peptidyl-tRNA molecules trapped in stalled 50S ribosomal subunits, and thus maintains levels of free tRNAs and 50S ribosomes. This Borrelia duttonii (strain Ly) protein is Peptidyl-tRNA hydrolase.